We begin with the raw amino-acid sequence, 128 residues long: Secreted RxLR effector protein RXLR-C09 (128 aa).

The first 22 residues, 1 to 22 (MRFCLVFIRLAAFVILSGGATS), serve as a signal peptide directing secretion. Residues 58-75 (RLLRLNDQADISGHDEER) carry the RxLR-dEER motif.

The protein belongs to the RxLR effector family.

It localises to the secreted. The protein localises to the host cell membrane. Its subcellular location is the host nucleus. Its function is as follows. Secreted effector that suppresses pattern-triggered immunity (PTI) in plant host. The sequence is that of Secreted RxLR effector protein RXLR-C09 from Plasmopara halstedii (Downy mildew of sunflower).